Consider the following 320-residue polypeptide: MDDDDDTSFNNSLDLYCDEDPFDSTPPPPPPPPEQQQQAGTTTPDDIDDEVMEYYKAKQRCYALQIRDYCCYLQCHHLLLQQQQHGVAAARLKAAMGRLGLEAATAFNAANYLDRFLSINCHLKWEEWMVEVVSVGCLSLACKLDEVTIPSLHDLQMEEAMGHSFRASTIRDMELTLLKALRWRLACVTPFSFLPVTTTTTTTRALLLRSLLDPSFLRFDASLLAASALTLSSTTPQHPNHLLLNRLIHPFSQTDHEVKECFNMMKALHLDMSKNPGRSSDHPCWSPISVVIPFHTDGTVKRSAISRCLFGSGRLKARSI.

The tract at residues 1–46 is disordered; sequence MDDDDDTSFNNSLDLYCDEDPFDSTPPPPPPPPEQQQQAGTTTPDD. The span at 24 to 34 shows a compositional bias: pro residues; sequence STPPPPPPPPE. Residues 35–44 show a composition bias toward low complexity; the sequence is QQQQAGTTTP.

This sequence belongs to the cyclin family. Cyclin D subfamily.

This Oryza sativa subsp. japonica (Rice) protein is Putative cyclin-D7-1 (CYCD7-1).